A 259-amino-acid polypeptide reads, in one-letter code: Tryptophan synthase alpha chain (259 aa).

Residues glutamate 48 and aspartate 59 each act as proton acceptor in the active site.

The protein belongs to the TrpA family. Tetramer of two alpha and two beta chains.

The catalysed reaction is (1S,2R)-1-C-(indol-3-yl)glycerol 3-phosphate + L-serine = D-glyceraldehyde 3-phosphate + L-tryptophan + H2O. It functions in the pathway amino-acid biosynthesis; L-tryptophan biosynthesis; L-tryptophan from chorismate: step 5/5. In terms of biological role, the alpha subunit is responsible for the aldol cleavage of indoleglycerol phosphate to indole and glyceraldehyde 3-phosphate. This chain is Tryptophan synthase alpha chain, found in Syntrophomonas wolfei subsp. wolfei (strain DSM 2245B / Goettingen).